Consider the following 95-residue polypeptide: Large ribosomal subunit protein uL22c (95 aa).

It belongs to the universal ribosomal protein uL22 family. As to quaternary structure, part of the 50S ribosomal subunit.

It is found in the plastid. Its subcellular location is the chloroplast. In terms of biological role, this protein binds specifically to 23S rRNA. The globular domain of the protein is located near the polypeptide exit tunnel on the outside of the subunit, while an extended beta-hairpin is found that lines the wall of the exit tunnel in the center of the 70S ribosome. The sequence is that of Large ribosomal subunit protein uL22c (rpl22) from Cyanidioschyzon merolae (strain NIES-3377 / 10D) (Unicellular red alga).